A 323-amino-acid polypeptide reads, in one-letter code: Calcium homeostasis modulator protein 2 (323 aa).

Over 1-21 (MAALIAENFRFLSLFFKSKDV) the chain is Cytoplasmic. The central pore stretch occupies residues 14–39 (LFFKSKDVMIFNGLVALGTVGSQELF). A helical transmembrane segment spans residues 22-43 (MIFNGLVALGTVGSQELFSVVA). Residues 44–52 (FHCPCSPAR) are Extracellular-facing. 2 disulfides stabilise this stretch: cysteine 46-cysteine 130 and cysteine 48-cysteine 162. The chain crosses the membrane as a helical span at residues 53–76 (NYLYGLTAIGVPALALFLIGVILN). Residues 77–101 (NHTWNLVAECQYRRAKNCSAAPNFL) lie on the Cytoplasmic side of the membrane. The chain crosses the membrane as a helical span at residues 102–132 (LLSSILGRAAVAPVTWSVISLLRGEAYVCAL). Topologically, residues 133–179 (SEFVDPSSLTAGDKGFPPAHATEVLARFPCGEGPANLSSFREEVSRR) are extracellular. Positions 145-152 (DKGFPPAH) are hemichannel docking. Residues 180–206 (LKYESQLFGWLLIGVVAILVFLTKCLK) form a helical membrane-spanning segment. Residues 207-323 (HYCSPLSYRQ…DNVEMALLTA (117 aa)) lie on the Cytoplasmic side of the membrane. An intersubunit interaction region spans residues 214–251 (YRQEAYWAQYRTNEDQLFQRTAEVHSRVLAANNVRRFF).

The protein belongs to the CALHM family. In terms of assembly, homo-undecamer. Two undecameric hemichannels can assemble in a head-to-head manner to form a gap junction. As to expression, neuron, astrocyte, and microglia.

Its subcellular location is the cell membrane. It carries out the reaction ATP(in) = ATP(out). With respect to regulation, inhibited by divalent cations such as Co(2+) and Ni(2+). Its function is as follows. Pore-forming subunit of Ca(2+) homeostasis modulator channels. Mediates ATP release from astrocytes and ATP-induced Ca(2+) influx in microglia thus regulating neuronal ATP and Ca(2+) homeostasis, synaptic transmission and neuroinflammatory response. May form intercellular gap junctions. The gating mechanism remains unknown. The polypeptide is Calcium homeostasis modulator protein 2 (Mus musculus (Mouse)).